The primary structure comprises 475 residues: Amino acid permease 8 (475 aa).

Positions 1 to 22 (MDAYNNPSAVESGDAAVKSVDD) are disordered. The Cytoplasmic portion of the chain corresponds to 1–31 (MDAYNNPSAVESGDAAVKSVDDDGREKRTGT). Transmembrane regions (helical) follow at residues 32 to 52 (FWTASAHIITAVIGSGVLSLA) and 53 to 73 (WAIAQLGWVAGTTVLVAFAII). Residues 74-120 (TYYTSTLLADCYRSPDSITGTRNYNYMGVVRSYLGGKKVQLCGVAQY) lie on the Cytoplasmic side of the membrane. A helical membrane pass occupies residues 121–141 (VNLVGVTIGYTITASISLVAI). The Extracellular portion of the chain corresponds to 142 to 157 (GKSNCYHDKGHKAKCS). A helical transmembrane segment spans residues 158 to 178 (VSNYPYMAAFGIVQIILSQLP). The Cytoplasmic portion of the chain corresponds to 179–185 (NFHKLSF). The helical transmembrane segment at 186–206 (LSIIAAVMSFSYASIGIGLAI) threads the bilayer. Residues 207–236 (ATVASGKIGKTELTGTVIGVDVTASEKVWK) are Extracellular-facing. A helical transmembrane segment spans residues 237–257 (LFQAIGDIAFSYAFTTILIEI). Residues 258 to 276 (QDTLRSSPPENKVMKRASL) are Cytoplasmic-facing. Residues 277–297 (VGVSTTTVFYILCGCIGYAAF) form a helical membrane-spanning segment. The Extracellular portion of the chain corresponds to 298-314 (GNQAPGDFLTDFGFYEP). The chain crosses the membrane as a helical span at residues 315-335 (YWLIDFANACIALHLIGAYQV). Residues 336–378 (YAQPFFQFVEENCNKKWPQSNFINKEYSSKVPLLGKCRVNLFR) are Cytoplasmic-facing. The chain crosses the membrane as a helical span at residues 379 to 398 (LVWRTCYVVLTTFVAMIFPF). Over 399–401 (FNA) the chain is Extracellular. A helical membrane pass occupies residues 402–424 (ILGLLGAFAFWPLTVYFPVAMHI). The Cytoplasmic segment spans residues 425 to 441 (AQAKVKKYSRRWLALNL). A helical membrane pass occupies residues 442-462 (LVLVCLIVSALAAVGSIIGLI). Residues 463–475 (NSVKSYKPFKNLD) lie on the Extracellular side of the membrane.

Belongs to the amino acid/polyamine transporter 2 family. Amino acid/auxin permease (AAAP) (TC 2.A.18.2) subfamily. As to expression, expressed in flower buds, siliques, developing seeds and funiculi.

It is found in the cell membrane. In terms of biological role, amino acid-proton symporter. Stereospecific transporter with a broad specificity for glutamate, aspartate and neutral and acidic amino acids. This Arabidopsis thaliana (Mouse-ear cress) protein is Amino acid permease 8 (AAP8).